Here is a 275-residue protein sequence, read N- to C-terminus: NAD kinase (275 aa).

The active-site Proton acceptor is the aspartate 53. NAD(+) is bound by residues 53–54 (DG), 129–130 (NE), arginine 155, aspartate 157, and 168–173 (TAYNKS).

This sequence belongs to the NAD kinase family. It depends on a divalent metal cation as a cofactor.

Its subcellular location is the cytoplasm. It catalyses the reaction NAD(+) + ATP = ADP + NADP(+) + H(+). Functionally, involved in the regulation of the intracellular balance of NAD and NADP, and is a key enzyme in the biosynthesis of NADP. Catalyzes specifically the phosphorylation on 2'-hydroxyl of the adenosine moiety of NAD to yield NADP. The polypeptide is NAD kinase (Streptococcus agalactiae serotype Ia (strain ATCC 27591 / A909 / CDC SS700)).